The chain runs to 216 residues: CRIB domain-containing protein RIC7 (216 aa).

In terms of domain architecture, CRIB spans 36-49; sequence IGNPTDVKHVAHIG. Positions 52 to 216 are disordered; sequence GPSDNATAPS…PQFEDDRNGF (165 aa). Positions 108–121 are enriched in basic and acidic residues; it reads SSSEKGSPTKERSD.

As to quaternary structure, interacts with ARAC4/ROP2 and ARAC11/ROP1. As to expression, expressed in roots, leaves, guard cells, stems, flowers, siliques and pollen.

It localises to the nucleus. The protein localises to the cytoplasm. Its subcellular location is the cell membrane. In terms of biological role, functions as a downstream effector of Rho-related GTP binding proteins of the 'Rho of Plants' (ROPs) family. Participates in the propagation of ROP GTPase signals in specific cellular responses. Functions as a downstream effector of active ARAC4/ROP2 GTPase which is involved in the prevention of excessive stomatal opening upon light stimulation. Is involved in pollen tube growth regulation through its interaction with ARAC11/ROP1. The protein is CRIB domain-containing protein RIC7 (RIC7) of Arabidopsis thaliana (Mouse-ear cress).